A 181-amino-acid chain; its full sequence is ADP-ribosylation factor 1 (181 aa).

The N-myristoyl glycine moiety is linked to residue Gly2. GTP-binding positions include 24-31, 67-71, and 126-129; these read GLDAAGKT, DVGGQ, and NKQD.

The protein belongs to the small GTPase superfamily. Arf family.

Its subcellular location is the golgi apparatus. The catalysed reaction is GTP + H2O = GDP + phosphate + H(+). Functionally, GTP-binding protein involved in protein trafficking; may modulate vesicle budding and uncoating within the Golgi apparatus. This Daucus carota (Wild carrot) protein is ADP-ribosylation factor 1 (ARF1).